The following is a 246-amino-acid chain: Myogenic factor 5 (246 aa).

Residues 1–38 (RVRARIPGLSSPEGEFPEDFEPRELPPFGAPAPTEPAC) form a disordered region. The bHLH domain maps to 73 to 124 (DRRKAATMRERRRLKKVNQAFETLKRCTTANPNQRLPKVEILRNAIRYIESL). Residues 210–246 (EEPGLPLRHAGSLSPGASIDSGARTPGSPPPRTYQAL) are disordered. A compositionally biased stretch (pro residues) spans 236 to 246 (GSPPPRTYQAL).

In terms of assembly, efficient DNA binding requires dimerization with another bHLH protein.

The protein localises to the nucleus. Functionally, acts as a transcriptional activator that promotes transcription of muscle-specific target genes and plays a role in muscle differentiation. Induces fibroblasts to differentiate into myoblasts. Probable sequence specific DNA-binding protein. The sequence is that of Myogenic factor 5 (MYF5) from Coturnix japonica (Japanese quail).